The primary structure comprises 460 residues: Cysteine--tRNA ligase (460 aa).

Zn(2+) is bound at residue Cys28. The short motif at 30–40 is the 'HIGH' region element; that stretch reads VTIYDLCHIGH. Zn(2+)-binding residues include Cys209, His234, and Glu238. The 'KMSKS' region signature appears at 266 to 270; that stretch reads KMSKS. An ATP-binding site is contributed by Lys269.

The protein belongs to the class-I aminoacyl-tRNA synthetase family. In terms of assembly, monomer. Zn(2+) serves as cofactor.

Its subcellular location is the cytoplasm. It catalyses the reaction tRNA(Cys) + L-cysteine + ATP = L-cysteinyl-tRNA(Cys) + AMP + diphosphate. In Vibrio vulnificus (strain CMCP6), this protein is Cysteine--tRNA ligase.